The sequence spans 170 residues: MARVEL domain-containing protein 1 (170 aa).

The Cytoplasmic segment spans residues 1–38 (MEGERPRSDTVTTTVSSHMETISLGGSIAYDRSFLRSP). In terms of domain architecture, MARVEL spans 34-167 (FLRSPTGVLL…STYFSFQAWR (134 aa)). The helical transmembrane segment at 39-59 (TGVLLLMEIMFGLLVWALIAG) threads the bilayer. Residues 60–67 (SEYFLFSA) lie on the Extracellular side of the membrane. A helical transmembrane segment spans residues 68 to 88 (FGWVMFVAVFYWVLSVFFFLL). The Cytoplasmic segment spans residues 89–102 (HLTRANTRITKVPW). The chain crosses the membrane as a helical span at residues 103–123 (SLVGLCFNGSAFVLYLIAAVV). The Extracellular segment spans residues 124 to 145 (EASSVNKDVHQHHNYNSWTASS). The helical transmembrane segment at 146 to 166 (FFAFIVTVCYALSTYFSFQAW) threads the bilayer. The Cytoplasmic portion of the chain corresponds to 167-170 (RTKS).

The protein localises to the membrane. It localises to the nucleus. In Xenopus laevis (African clawed frog), this protein is MARVEL domain-containing protein 1 (marveld1).